Reading from the N-terminus, the 506-residue chain is Histone acetyltransferase esa-1 (506 aa).

The interval 1–24 (MSPPGGDATVGSDEKRQKGKATPD) is disordered. Residues 26-78 (IKMGCIAMVMKEGQLRRAEILSIKDTKSGRQFYCNFDNFNKRLDEWVPAARID) form the Tudor-knot domain. The interval 82 to 215 (DVEWPNPDKD…LRTSGSMTQN (134 aa)) is disordered. Residues 87–98 (NPDKDKQKDAKT) are compositionally biased toward basic and acidic residues. The segment covering 109-120 (QPSKKNNQKKAS) has biased composition (basic residues). Basic and acidic residues predominate over residues 167 to 178 (GGDKGVKRKADE). An MYST-type HAT domain is found at 220–494 (SRIRNISKVE…IDPERIQWKP (275 aa)). A C2HC MYST-type zinc finger spans residues 253–278 (IYICEFCLSYYGELKSFVRHRQKCTL). The short motif at 303 to 324 (RTWCRNLCLLSKMFLDHKTLYY) is the ESA1-RPD3 motif element. Lys320 is modified (N6-acetyllysine; by autocatalysis). Acetyl-CoA-binding positions include 361 to 365 (ACILT) and 370 to 376 (QRKGYGR). Glu396 acts as the Proton donor/acceptor in catalysis. Ser400 lines the acetyl-CoA pocket.

It belongs to the MYST (SAS/MOZ) family. As to quaternary structure, component of the NuA4 histone acetyltransferase complex. In terms of processing, autoacetylation at Lys-320 is required for proper function.

It is found in the nucleus. Its subcellular location is the chromosome. The enzyme catalyses L-lysyl-[histone] + acetyl-CoA = N(6)-acetyl-L-lysyl-[histone] + CoA + H(+). The catalysed reaction is L-lysyl-[protein] + acetyl-CoA = N(6)-acetyl-L-lysyl-[protein] + CoA + H(+). It carries out the reaction 2-hydroxyisobutanoyl-CoA + L-lysyl-[protein] = N(6)-(2-hydroxyisobutanoyl)-L-lysyl-[protein] + CoA + H(+). It catalyses the reaction (2E)-butenoyl-CoA + L-lysyl-[protein] = N(6)-(2E)-butenoyl-L-lysyl-[protein] + CoA + H(+). Its function is as follows. Catalytic component of the NuA4 histone acetyltransferase (HAT) complex which is involved in epigenetic transcriptional activation of selected genes principally by acetylation of nucleosomal histones H4, H3, H2B, H2A and H2A variant H2A.Z. Acetylates histone H4 to form H4K5ac, H4K8ac, H4K12ac and H4K16ac, histone H3 to form H3K14ac, and histone H2A to form H2AK4ac and H2AK7ac. The NuA4 complex is involved in the DNA damage response and is required for chromosome segregation. The NuA4 complex plays a direct role in repair of DNA double-strand breaks (DSBs) through homologous recombination. Recruitment to promoters depends on H3K4me. Also acetylates non-histone proteins. In addition to protein acetyltransferase, can use different acyl-CoA substrates, such as 2-hydroxyisobutanoyl-CoA (2-hydroxyisobutyryl-CoA) or (2E)-butenoyl-CoA (crotonyl-CoA), and is able to mediate protein 2-hydroxyisobutyrylation and crotonylation, respectively. The sequence is that of Histone acetyltransferase esa-1 (esa-1) from Neurospora crassa (strain ATCC 24698 / 74-OR23-1A / CBS 708.71 / DSM 1257 / FGSC 987).